A 470-amino-acid polypeptide reads, in one-letter code: Leucine-rich repeat extensin-like protein 6 (470 aa).

Residues 1 to 28 (MREDTFFFQWWFLVSGLSFIFLLPQAFT) form the signal peptide. N-linked (GlcNAc...) asparagine glycosylation is present at N83. LRR repeat units follow at residues 98-122 (VLTV…LGLL), 123-146 (TDLA…LKCL), 147-170 (HLLH…IFSL), 171-194 (PSLK…LFDL), 196-217 (LDAL…IGNS), 219-241 (VSVL…FYKM), 243-265 (KTLH…EIGL), 266-290 (LNQL…IGDM), 291-314 (KSLE…ICRL), and 316-337 (RLEN…CLRL). N319 carries an N-linked (GlcNAc...) asparagine glycan. Residues 378-411 (SPPPPPPPPPPPPPPPPPPPPPPPPPPPPPYVYP) form a disordered region. The segment at 378–470 (SPPPPPPPPP…CNDLPTPVHY (93 aa)) is contains the Ser-Pro(4) repeats.

Post-translationally, hydroxylated on proline residues in the S-P-P-P-P repeat. In terms of processing, O-glycosylated on hydroxyprolines. Expressed in roots.

The protein resides in the secreted. The protein localises to the cell wall. Functionally, modulates cell morphogenesis by regulating cell wall formation and assembly, and/or growth polarization. In Arabidopsis thaliana (Mouse-ear cress), this protein is Leucine-rich repeat extensin-like protein 6 (LRX6).